The following is a 753-amino-acid chain: 5-methyltetrahydropteroyltriglutamate--homocysteine methyltransferase (753 aa).

Residues 17 to 20 (RELK) and K117 each bind 5-methyltetrahydropteroyltri-L-glutamate. L-homocysteine-binding positions include 431 to 433 (IGS) and E484. L-methionine is bound by residues 431–433 (IGS) and E484. 5-methyltetrahydropteroyltri-L-glutamate-binding positions include 515–516 (RC) and W561. Residue D599 coordinates L-homocysteine. D599 contributes to the L-methionine binding site. 5-methyltetrahydropteroyltri-L-glutamate is bound at residue E605. Zn(2+) contacts are provided by H641, C643, and E665. H694 (proton donor) is an active-site residue. C726 contributes to the Zn(2+) binding site.

It belongs to the vitamin-B12 independent methionine synthase family. Requires Zn(2+) as cofactor.

The enzyme catalyses 5-methyltetrahydropteroyltri-L-glutamate + L-homocysteine = tetrahydropteroyltri-L-glutamate + L-methionine. It participates in amino-acid biosynthesis; L-methionine biosynthesis via de novo pathway; L-methionine from L-homocysteine (MetE route): step 1/1. Functionally, catalyzes the transfer of a methyl group from 5-methyltetrahydrofolate to homocysteine resulting in methionine formation. The sequence is that of 5-methyltetrahydropteroyltriglutamate--homocysteine methyltransferase from Citrobacter koseri (strain ATCC BAA-895 / CDC 4225-83 / SGSC4696).